We begin with the raw amino-acid sequence, 271 residues long: Phosphatidylglycerol--prolipoprotein diacylglyceryl transferase (271 aa).

Helical transmembrane passes span 25–45, 60–80, 103–123, 134–154, 181–201, 209–229, and 235–255; these read WYGI…KFFV, YFIW…ILIY, FVGI…IATL, WIFL…GRIG, PSQL…VYLA, GELI…CEFY, and GIGF…IMFI. Arginine 152 is an a 1,2-diacyl-sn-glycero-3-phospho-(1'-sn-glycerol) binding site.

It belongs to the Lgt family.

The protein localises to the cell inner membrane. It catalyses the reaction L-cysteinyl-[prolipoprotein] + a 1,2-diacyl-sn-glycero-3-phospho-(1'-sn-glycerol) = an S-1,2-diacyl-sn-glyceryl-L-cysteinyl-[prolipoprotein] + sn-glycerol 1-phosphate + H(+). It functions in the pathway protein modification; lipoprotein biosynthesis (diacylglyceryl transfer). In terms of biological role, catalyzes the transfer of the diacylglyceryl group from phosphatidylglycerol to the sulfhydryl group of the N-terminal cysteine of a prolipoprotein, the first step in the formation of mature lipoproteins. This Campylobacter jejuni subsp. jejuni serotype O:6 (strain 81116 / NCTC 11828) protein is Phosphatidylglycerol--prolipoprotein diacylglyceryl transferase.